The primary structure comprises 742 residues: Photosystem I P700 chlorophyll a apoprotein A2 2 (742 aa).

The next 8 membrane-spanning stretches (helical) occupy residues 46-69, 135-158, 175-199, 273-291, 334-357, 373-399, 421-443, and 524-542; these read IFAT…FHVA, LYQG…LHLQ, LNHH…HVAI, MAHH…GHMY, LHFQ…QHMY, AALY…IFWV, AIIS…LYVH, and FLVH…LICV. Residues Cys566 and Cys575 each contribute to the [4Fe-4S] cluster site. 2 helical membrane passes run 583 to 604 and 651 to 673; these read SFYL…YWHW and LSVW…MFLI. The chlorophyll a site is built by His662, Met670, and Tyr678. Residue Trp679 coordinates phylloquinone. Residues 715 to 735 traverse the membrane as a helical segment; the sequence is LVGLAHFTVGYILTYAAFLIA.

The protein belongs to the PsaA/PsaB family. In terms of assembly, the PsaA/B heterodimer binds the P700 chlorophyll special pair and subsequent electron acceptors. PSI consists of a core antenna complex that captures photons, and an electron transfer chain that converts photonic excitation into a charge separation. The cyanobacterial PSI reaction center is composed of one copy each of PsaA,B,C,D,E,F,I,J,K,L,M and X, and forms trimeric complexes. PSI electron transfer chain: 5 chlorophyll a, 1 chlorophyll a', 2 phylloquinones and 3 4Fe-4S clusters. PSI core antenna: 90 chlorophyll a, 22 carotenoids, 3 phospholipids and 1 galactolipid. P700 is a chlorophyll a/chlorophyll a' dimer, A0 is one or more chlorophyll a, A1 is one or both phylloquinones and FX is a shared 4Fe-4S iron-sulfur center. serves as cofactor.

It localises to the cellular thylakoid membrane. It catalyses the reaction reduced [plastocyanin] + hnu + oxidized [2Fe-2S]-[ferredoxin] = oxidized [plastocyanin] + reduced [2Fe-2S]-[ferredoxin]. PsaA and PsaB bind P700, the primary electron donor of photosystem I (PSI), as well as the electron acceptors A0, A1 and FX. PSI is a plastocyanin/cytochrome c6-ferredoxin oxidoreductase, converting photonic excitation into a charge separation, which transfers an electron from the donor P700 chlorophyll pair to the spectroscopically characterized acceptors A0, A1, FX, FA and FB in turn. Oxidized P700 is reduced on the lumenal side of the thylakoid membrane by plastocyanin or cytochrome c6. The sequence is that of Photosystem I P700 chlorophyll a apoprotein A2 2 from Trichormus variabilis (strain ATCC 29413 / PCC 7937) (Anabaena variabilis).